Here is a 595-residue protein sequence, read N- to C-terminus: MAGAIASRMSFSSLKRKQPKTFTVRIVTMDAEMEFNCEMKWKGKDLFDLVCRTLGLRETWFFGLQYTIKDTVAWLKMDKKVLDHDVSKEEPVTFHFLAKFYPENAEEELVQEITQHLFFLQVKKQILDEKIYCPPEASVLLASYAVQAKYGDYDPSVHKRGFLAQEELLPKRVINLYQMTPEMWEERITAWYAEHRGRARDEAEMEYLKIAQDLEMYGVNYFAIRNKKGTELLLGVDALGLHIYDPENRLTPKISFPWNEIRNISYSDKEFTIKPLDKKIDVFKFNSSKLRVNKLILQLCIGNHDLFMRRRKADSLEVQQMKAQAREEKARKQMERQRLAREKQMREEAERTRDELERRLLQMKEEATMANEALMRSEETADLLAEKAQITEEEAKLLAQKAAEAEQEMQRIKATAIRTEEEKRLMEQKVLEAEVLALKMAEESERRAKEADQLKQDLQEAREAERRAKQKLLEIATKPTYPPMNPIPAPLPPDIPSFSLIGDSLSFDFKDTDMKRLSMEIEKEKVEYMEKSKHLQEQLNELKTEIEALKLKERETALDILHNENSDRGGSSKHNTIKKLTLQSAKSRVAFFEEL.

Phosphoserine is present on Ser13. The FERM domain occupies Phe22–Arg311. The residue at position 518 (Ser518) is a Phosphoserine; by PAK.

As to quaternary structure, interacts with NHERF1, HGS and AGAP2. Interacts with SGSM3. Interacts (via FERM domain) with MPP1. Interacts with LAYN and WWC1. Interacts with the CUL4A-RBX1-DDB1-VprBP/DCAF1 E3 ubiquitin-protein ligase complex. The unphosphorylated form interacts (via FERM domain) with VPRBP/DCAF1. Interacts (via FERM domain) with NOP53; the interaction is direct. Interacts with SCHIP1; the interaction is direct. Phosphorylation of Ser-518 inhibits nuclear localization by disrupting the intramolecular association of the FERM domain with the C-terminal tail. In terms of processing, ubiquitinated by the CUL4A-RBX1-DDB1-DCAF1/VprBP E3 ubiquitin-protein ligase complex for ubiquitination and subsequent proteasome-dependent degradation. Post-translationally, phosphorylation of Ser-518 inhibits nuclear localization by disrupting the intramolecular association of the FERM domain with the C-terminal tail. The dephosphorylation of Ser-518 favors the interaction with NOP53.

Its subcellular location is the cell membrane. The protein localises to the cell projection. It is found in the cytoplasm. It localises to the cytoskeleton. The protein resides in the nucleus. Functionally, probable regulator of the Hippo/SWH (Sav/Wts/Hpo) signaling pathway, a signaling pathway that plays a pivotal role in tumor suppression by restricting proliferation and promoting apoptosis. Along with WWC1 can synergistically induce the phosphorylation of LATS1 and LATS2 and can probably function in the regulation of the Hippo/SWH (Sav/Wts/Hpo) signaling pathway. May act as a membrane stabilizing protein. May inhibit PI3 kinase by binding to AGAP2 and impairing its stimulating activity. Suppresses cell proliferation and tumorigenesis by inhibiting the CUL4A-RBX1-DDB1-VprBP/DCAF1 E3 ubiquitin-protein ligase complex. The polypeptide is Merlin (NF2) (Papio anubis (Olive baboon)).